Consider the following 674-residue polypeptide: Anosmin-1 (674 aa).

The first 21 residues, Met1–Cys21, serve as a signal peptide directing secretion. 4 cysteine pairs are disulfide-bonded: Cys47/Cys71, Cys80/Cys99, Cys84/Cys95, and Cys110/Cys114. Asn65 carries N-linked (GlcNAc...) asparagine glycosylation. Residues Leu121–Lys170 enclose the WAP domain. Fibronectin type-III domains are found at residues Pro180–Pro281, Ala286–Asp392, Arg418–Thr515, and Lys545–Pro652. N-linked (GlcNAc...) asparagine glycosylation is found at Asn203 and Asn294. Polar residues predominate over residues Ser388–Val402. Residues Ser388–Tyr413 are disordered. Asn465, Asn548, and Asn559 each carry an N-linked (GlcNAc...) asparagine glycan. Residues Pro655–Tyr674 are disordered. Positions His656–Lys668 are enriched in basic residues.

The protein localises to the cell surface. In terms of biological role, may be an adhesion-like molecule with anti-protease activity. The protein is Anosmin-1 of Coturnix japonica (Japanese quail).